A 132-amino-acid chain; its full sequence is Large ribosomal subunit protein bL21 (132 aa).

The interval 104–132 (GKAPSIGPRPPREKKPVVETSAEADDAAA) is disordered.

It belongs to the bacterial ribosomal protein bL21 family. In terms of assembly, part of the 50S ribosomal subunit. Contacts protein L20.

Its function is as follows. This protein binds to 23S rRNA in the presence of protein L20. This chain is Large ribosomal subunit protein bL21, found in Rhodopseudomonas palustris (strain BisB18).